The primary structure comprises 303 residues: MMMMIQRRGGERQDSSAAAYNVVHKLPHGDSPYVRAKHVQLVEKDAEAAIELFWIAIKARDRVDSALKDMALLMKQQNRAEEAIDAIQSFRDLCSRQAQESLDNVLIDLYKKCGRIEEQVELLKQKLWMIYQGEAFNGKPTKTARSHGKKFQVTVEKETSRILGNLGWAYMQLMDYTAAEAVYRKAQLIEPDANKACNLCTCLIKQGKHDEARSILFRDVLMENKEGSGDPRLMARVQELLSELKPQEEEAAASVSVECEVGIDEIAVVEGLDEFVKEWRRPYRTRRLPIFEEILPLRDQLAC.

Residues 62–89 (RVDSALKDMALLMKQQNRAEEAIDAIQS) are a coiled coil. TPR repeat units follow at residues 64 to 97 (DSAL…CSRQ), 100 to 133 (ESLD…IYQG), 160 to 193 (SRIL…EPDA), and 195 to 226 (KACN…ENKE). The stretch at 232–253 (RLMARVQELLSELKPQEEEAAA) forms a coiled coil.

The protein belongs to the MS5 protein family.

The protein localises to the nucleus. In terms of biological role, involved in the utilization of stored sulfate under sulfur-deficient conditions. This is Protein SULFUR DEFICIENCY-INDUCED 2 from Arabidopsis thaliana (Mouse-ear cress).